A 332-amino-acid polypeptide reads, in one-letter code: Glucokinase (332 aa).

15–20 contacts ATP; it reads ADIGGT.

Belongs to the bacterial glucokinase family.

Its subcellular location is the cytoplasm. The catalysed reaction is D-glucose + ATP = D-glucose 6-phosphate + ADP + H(+). The chain is Glucokinase from Campylobacter jejuni subsp. doylei (strain ATCC BAA-1458 / RM4099 / 269.97).